Reading from the N-terminus, the 201-residue chain is Proteasome subunit beta type-2 (201 aa).

Position 1 is an N-acetylmethionine (M1).

It belongs to the peptidase T1B family. In terms of assembly, the 26S proteasome consists of a 20S proteasome core and two 19S regulatory subunits. The 20S proteasome core is a barrel-shaped complex made of 28 subunits that are arranged in four stacked rings. The two outer rings are each formed by seven alpha subunits, and the two inner rings are formed by seven beta subunits. The proteolytic activity is exerted by three beta-subunits PSMB5, PSMB6 and PSMB7.

The protein localises to the cytoplasm. The protein resides in the nucleus. In terms of biological role, non-catalytic component of the 20S core proteasome complex involved in the proteolytic degradation of most intracellular proteins. This complex plays numerous essential roles within the cell by associating with different regulatory particles. Associated with two 19S regulatory particles, forms the 26S proteasome and thus participates in the ATP-dependent degradation of ubiquitinated proteins. The 26S proteasome plays a key role in the maintenance of protein homeostasis by removing misfolded or damaged proteins that could impair cellular functions, and by removing proteins whose functions are no longer required. Associated with the PA200 or PA28, the 20S proteasome mediates ubiquitin-independent protein degradation. This type of proteolysis is required in several pathways including spermatogenesis (20S-PA200 complex) or generation of a subset of MHC class I-presented antigenic peptides (20S-PA28 complex). The protein is Proteasome subunit beta type-2 (PSMB2) of Bos taurus (Bovine).